The sequence spans 230 residues: Large ribosomal subunit protein uL1 (230 aa).

It belongs to the universal ribosomal protein uL1 family. As to quaternary structure, part of the 50S ribosomal subunit.

Functionally, binds directly to 23S rRNA. The L1 stalk is quite mobile in the ribosome, and is involved in E site tRNA release. Its function is as follows. Protein L1 is also a translational repressor protein, it controls the translation of the L11 operon by binding to its mRNA. The chain is Large ribosomal subunit protein uL1 from Leptospira interrogans serogroup Icterohaemorrhagiae serovar copenhageni (strain Fiocruz L1-130).